We begin with the raw amino-acid sequence, 179 residues long: Large ribosomal subunit protein uL10 (179 aa).

The tract at residues 137–179 (KEELYAMLVGRVKAPITGLVFALSGILRNLVYVLNAIKEKKSE) is binds L7/L12 dimers.

In terms of assembly, part of the ribosomal stalk of the 50S ribosomal subunit. The N-terminus interacts with L11 and 23S rRNA to form the base of the stalk. The C-terminus forms an elongated spine to which 3 L12 dimers bind in a sequential fashion forming a heptameric L10(L12)2(L12)2(L12)2 complex.

Forms part of the ribosomal stalk, playing a central role in the interaction of the ribosome with GTP-bound translation factors (such as IF-2, EF-Tu, EF-G and RF3). This Thermotoga maritima (strain ATCC 43589 / DSM 3109 / JCM 10099 / NBRC 100826 / MSB8) protein is Large ribosomal subunit protein uL10 (rplJ).